The primary structure comprises 399 residues: Probable aspartate/prephenate aminotransferase (399 aa).

L-aspartate contacts are provided by Gly39, Trp125, and Asn175. At Lys239 the chain carries N6-(pyridoxal phosphate)lysine. Residue Arg375 participates in L-aspartate binding.

It belongs to the class-I pyridoxal-phosphate-dependent aminotransferase family. As to quaternary structure, homodimer. Requires pyridoxal 5'-phosphate as cofactor.

It localises to the cytoplasm. The catalysed reaction is L-aspartate + 2-oxoglutarate = oxaloacetate + L-glutamate. It catalyses the reaction L-arogenate + 2-oxoglutarate = prephenate + L-glutamate. In terms of biological role, catalyzes the reversible conversion of aspartate and 2-oxoglutarate to glutamate and oxaloacetate. Can also transaminate prephenate in the presence of glutamate. This Rickettsia prowazekii (strain Madrid E) protein is Probable aspartate/prephenate aminotransferase (aatA).